The primary structure comprises 298 residues: Putative GATA zinc finger domain-containing protein 25 (298 aa).

Residues 4–37 (DNKNKNDNYQESIQRIVNQRNNLLKEIENKINQQ) adopt a coiled-coil conformation. The disordered stretch occupies residues 148-227 (QQQLQQSHTK…RGRPSKPKPE (80 aa)). Positions 183–202 (EENEENEENEENEENEENEE) are enriched in acidic residues. The span at 203-212 (NKEKDVEVAK) shows a compositional bias: basic and acidic residues. The segment covering 214–223 (NKPKRGRPSK) has biased composition (basic residues). The segment at 229–256 (CFRYGTRSCPYWRKNVIKGELVDVCNAC) adopts a GATA-type; degenerate zinc-finger fold.

This is Putative GATA zinc finger domain-containing protein 25 (gtaY) from Dictyostelium discoideum (Social amoeba).